We begin with the raw amino-acid sequence, 509 residues long: Poly(A) RNA polymerase GLD2-B (509 aa).

The segment at 88–125 is disordered; that stretch reads PGSPPSSFQNRKRRSDEGNSPYDVKRQRFQSPQEQTVN. Residues 116–125 are compositionally biased toward polar residues; the sequence is FQSPQEQTVN. Residues D240 and D242 each coordinate Mg(2+). Residues 409–462 form the PAP-associated domain; sequence LGDLLLGFLKYFAVEFDWSKDIISLREAKALPRTDDYEWRNKYICVEEPFDGSN.

It belongs to the DNA polymerase type-B-like family. GLD2 subfamily. Component of a complex at least composed of cpeb1, cpsf1, tent2/gld2, pabpc1/ePAB, parn and sympk. Following oocyte maturation, parn is expelled from the complex. Interacts with rbfox2. Interacts with sympk. Requires Mg(2+) as cofactor. The cofactor is Mn(2+).

Its subcellular location is the cytoplasm. It carries out the reaction RNA(n) + ATP = RNA(n)-3'-adenine ribonucleotide + diphosphate. In terms of biological role, cytoplasmic poly(A) RNA polymerase that adds successive AMP monomers to the 3'-end of specific RNAs, forming a poly(A) tail. In contrast to the canonical nuclear poly(A) RNA polymerase, it only adds poly(A) to selected cytoplasmic mRNAs during oocyte maturation. Plays a central role during oocyte maturation by mediating polyadenylation of dormant mRNAs, which contain 5'AAUAAA-3' sequence in their 3'-UTR. In immature oocytes, polyadenylation of poly(A) tails is counteracted by the ribonuclease parn. During maturation parn is excluded from the ribonucleoprotein complex, allowing poly(A) elongation and activation of mRNAs. May not play a role in replication-dependent histone mRNA degradation. This Xenopus laevis (African clawed frog) protein is Poly(A) RNA polymerase GLD2-B.